A 194-amino-acid chain; its full sequence is Thioredoxin O1, mitochondrial (194 aa).

A mitochondrion-targeting transit peptide spans 1–42 (MKGNWSIVRKVLHRQFSTLRSSTPSSRLSTSIRPLVLAPNSI). Ser75 is subject to Phosphoserine. The Thioredoxin domain occupies 89–194 (VKSEEEFINA…LKNLMEQLYK (106 aa)). Active-site nucleophile residues include Cys118 and Cys121. A disulfide bridge links Cys118 with Cys121.

This sequence belongs to the thioredoxin family. Plant O-type subfamily.

The protein resides in the mitochondrion matrix. Thiol-disulfide oxidoreductase that may participate in various redox reactions. Possesses insulin disulfide bonds reducing activity. Reduced by thioredoxin reductases NTRA and NTRB. In Arabidopsis thaliana (Mouse-ear cress), this protein is Thioredoxin O1, mitochondrial.